A 343-amino-acid chain; its full sequence is 3-dehydroquinate synthase (343 aa).

Residues 61 to 66 (SGEKYK), 95 to 99 (GVISD), 119 to 120 (TT), K132, K141, and 159 to 162 (FLKT) each bind NAD(+). Residues E174, H231, and H248 each coordinate Zn(2+).

Belongs to the sugar phosphate cyclases superfamily. Dehydroquinate synthase family. It depends on NAD(+) as a cofactor. The cofactor is Co(2+). Zn(2+) is required as a cofactor.

The protein resides in the cytoplasm. The catalysed reaction is 7-phospho-2-dehydro-3-deoxy-D-arabino-heptonate = 3-dehydroquinate + phosphate. It participates in metabolic intermediate biosynthesis; chorismate biosynthesis; chorismate from D-erythrose 4-phosphate and phosphoenolpyruvate: step 2/7. Functionally, catalyzes the conversion of 3-deoxy-D-arabino-heptulosonate 7-phosphate (DAHP) to dehydroquinate (DHQ). The chain is 3-dehydroquinate synthase from Helicobacter pylori (strain J99 / ATCC 700824) (Campylobacter pylori J99).